The primary structure comprises 247 residues: Adenosylcobinamide-GDP ribazoletransferase (247 aa).

A run of 6 helical transmembrane segments spans residues 34–54 (IVTF…VFVA), 59–79 (CGIP…TGGF), 113–133 (GGLA…ELAL), 138–158 (MLAA…LLMY), 171–193 (VFIG…ILAA), and 194–214 (ILMP…AIFI).

Belongs to the CobS family. Mg(2+) serves as cofactor.

The protein localises to the cell inner membrane. The catalysed reaction is alpha-ribazole + adenosylcob(III)inamide-GDP = adenosylcob(III)alamin + GMP + H(+). It catalyses the reaction alpha-ribazole 5'-phosphate + adenosylcob(III)inamide-GDP = adenosylcob(III)alamin 5'-phosphate + GMP + H(+). It participates in cofactor biosynthesis; adenosylcobalamin biosynthesis; adenosylcobalamin from cob(II)yrinate a,c-diamide: step 7/7. In terms of biological role, joins adenosylcobinamide-GDP and alpha-ribazole to generate adenosylcobalamin (Ado-cobalamin). Also synthesizes adenosylcobalamin 5'-phosphate from adenosylcobinamide-GDP and alpha-ribazole 5'-phosphate. The chain is Adenosylcobinamide-GDP ribazoletransferase from Citrobacter koseri (strain ATCC BAA-895 / CDC 4225-83 / SGSC4696).